The chain runs to 40 residues: uncharacterized protein (40 aa).

This is an uncharacterized protein from Streptomyces peucetius.